The sequence spans 273 residues: Undecaprenyl-diphosphatase (273 aa).

Transmembrane regions (helical) follow at residues 13–35, 45–65, 90–110, 116–136, 157–177, 190–210, 222–242, and 252–272; these read LGVV…IIVG, ANTF…VMFW, LSLI…LIFH, LFNP…LIAA, AFVI…RSGA, YAAS…ATVL, GDVP…LIAI, and ISFI…YVVF.

It belongs to the UppP family.

It is found in the cell inner membrane. It carries out the reaction di-trans,octa-cis-undecaprenyl diphosphate + H2O = di-trans,octa-cis-undecaprenyl phosphate + phosphate + H(+). Its function is as follows. Catalyzes the dephosphorylation of undecaprenyl diphosphate (UPP). Confers resistance to bacitracin. This Klebsiella pneumoniae subsp. pneumoniae (strain ATCC 700721 / MGH 78578) protein is Undecaprenyl-diphosphatase.